A 165-amino-acid chain; its full sequence is UPF0254 protein MmarC5_0742 (165 aa).

The protein belongs to the UPF0254 family.

This Methanococcus maripaludis (strain C5 / ATCC BAA-1333) protein is UPF0254 protein MmarC5_0742.